A 157-amino-acid chain; its full sequence is Putative low molecular weight protein-tyrosine-phosphatase slr0328 (157 aa).

C7 functions as the Nucleophile in the catalytic mechanism. R13 is a catalytic residue. D124 functions as the Proton donor in the catalytic mechanism.

Belongs to the low molecular weight phosphotyrosine protein phosphatase family.

It catalyses the reaction O-phospho-L-tyrosyl-[protein] + H2O = L-tyrosyl-[protein] + phosphate. This Synechocystis sp. (strain ATCC 27184 / PCC 6803 / Kazusa) protein is Putative low molecular weight protein-tyrosine-phosphatase slr0328.